A 502-amino-acid chain; its full sequence is Tryptophan decarboxylase TDC1 (502 aa).

A compositionally biased stretch (polar residues) spans 1–18; sequence MGSLDSNYDTESPASVGQ. The tract at residues 1–21 is disordered; sequence MGSLDSNYDTESPASVGQFNP. The residue at position 319 (Lys319) is an N6-(pyridoxal phosphate)lysine.

The protein belongs to the group II decarboxylase family. Pyridoxal 5'-phosphate is required as a cofactor. Highly expressed in apex. Expressed in young stem and bark tissues. Expressed at low levels in leaves, fruits and seeds.

It catalyses the reaction L-tryptophan + H(+) = tryptamine + CO2. Its function is as follows. Involved in the biosynthesis of tryptamine. Supplies tryptamine for the indole moiety of camptothecin (CPT), an anti-cancer monoterpene alkaloid. Represents a key step in monoterpene indole alkaloid biosynthesis. Is specific for tryptophan, and inactive against tyrosine, phenylalanine and 3,4-dihydroxyphenylalanine (dopa). In Camptotheca acuminata (Happy tree), this protein is Tryptophan decarboxylase TDC1.